Consider the following 264-residue polypeptide: Thymidylate synthase (264 aa).

Position 21 (arginine 21) interacts with dUMP. Residue histidine 51 coordinates (6R)-5,10-methylene-5,6,7,8-tetrahydrofolate. DUMP is bound at residue 126-127; that stretch reads RR. Cysteine 146 functions as the Nucleophile in the catalytic mechanism. DUMP-binding positions include 166 to 169, asparagine 177, and 207 to 209; these read RSCD and HLY. Aspartate 169 serves as a coordination point for (6R)-5,10-methylene-5,6,7,8-tetrahydrofolate. Alanine 263 provides a ligand contact to (6R)-5,10-methylene-5,6,7,8-tetrahydrofolate.

It belongs to the thymidylate synthase family. Bacterial-type ThyA subfamily. As to quaternary structure, homodimer.

The protein resides in the cytoplasm. The enzyme catalyses dUMP + (6R)-5,10-methylene-5,6,7,8-tetrahydrofolate = 7,8-dihydrofolate + dTMP. Its pathway is pyrimidine metabolism; dTTP biosynthesis. Catalyzes the reductive methylation of 2'-deoxyuridine-5'-monophosphate (dUMP) to 2'-deoxythymidine-5'-monophosphate (dTMP) while utilizing 5,10-methylenetetrahydrofolate (mTHF) as the methyl donor and reductant in the reaction, yielding dihydrofolate (DHF) as a by-product. This enzymatic reaction provides an intracellular de novo source of dTMP, an essential precursor for DNA biosynthesis. The protein is Thymidylate synthase of Shewanella amazonensis (strain ATCC BAA-1098 / SB2B).